A 387-amino-acid chain; its full sequence is MKTVSIFGSTGAIGQMIIDVILASSDSYQVKALVAKSNVQLLAFQAKIVNAEMVVIADVGLYKELKDLLFGTNVKISVGDVGMQMAASLNVDYVMMAIVGIAALVPMVYLISAGVKVIALANKESVVCGGTLLFNLAREKNVNVIPVDSEHNAIFQILHSNDRENIDKITITGSGGALLYMDYDQMRNITVQETIKHPVWKMGKKISVDSATMVNKSLEIIEAYHLFSVKPEKLDVIIHPEAIVHGIVSYVDGACIAFMSVPDMKISIMYTLSWPNRMSMLYKKLNLASYHQLTFMKPDINKFPGIRLGFEILRTSNIHANSIIFNTANEIAVDAFLNRKIGFLDIVNVIYSTLDMVDCLHINSLSDILECDSIARRVASDIICKLN.

NADPH contacts are provided by Thr-10, Gly-11, Ile-13, Asn-38, and Asn-122. Lys-123 is a binding site for 1-deoxy-D-xylulose 5-phosphate. Glu-124 provides a ligand contact to NADPH. Residue Asp-148 participates in Mn(2+) binding. 1-deoxy-D-xylulose 5-phosphate contacts are provided by Ser-149, Glu-150, Ser-174, and His-197. Glu-150 contacts Mn(2+). Gly-203 is an NADPH binding site. Positions 210, 215, 216, and 219 each coordinate 1-deoxy-D-xylulose 5-phosphate. Glu-219 contributes to the Mn(2+) binding site.

This sequence belongs to the DXR family. Requires Mg(2+) as cofactor. Mn(2+) is required as a cofactor.

The enzyme catalyses 2-C-methyl-D-erythritol 4-phosphate + NADP(+) = 1-deoxy-D-xylulose 5-phosphate + NADPH + H(+). The protein operates within isoprenoid biosynthesis; isopentenyl diphosphate biosynthesis via DXP pathway; isopentenyl diphosphate from 1-deoxy-D-xylulose 5-phosphate: step 1/6. Its function is as follows. Catalyzes the NADPH-dependent rearrangement and reduction of 1-deoxy-D-xylulose-5-phosphate (DXP) to 2-C-methyl-D-erythritol 4-phosphate (MEP). The polypeptide is 1-deoxy-D-xylulose 5-phosphate reductoisomerase (Ehrlichia ruminantium (strain Welgevonden)).